The primary structure comprises 346 residues: Cell shape-determining protein MreC (346 aa).

Residues 89 to 118 (NRRLKAELAEMRQWRDRALALQDQNDRFKS) are a coiled coil. Residues 292-346 (SLPPVTTEDPQTSILSNPVSRPVAPTPSPATATPSAAPAARPATTATPPQTGAPR) are disordered. Over residues 299-308 (EDPQTSILSN) the composition is skewed to polar residues. Residues 309–340 (PVSRPVAPTPSPATATPSAAPAARPATTATPP) show a composition bias toward low complexity.

This sequence belongs to the MreC family. In terms of assembly, interacts with penicillin-binding proteins (PBP2, PBP1a, PBP1b, PBP2a and PBP2b). Interacts with outer membrane proteins belonging to the TonB-dependent receptor family of transport proteins.

It is found in the periplasm. Involved in formation and maintenance of cell shape. Required for the spatial organization of components of the peptidoglycan-synthesizing holoenzyme in the periplasm and peptidoglycan synthetic activity. The protein is Cell shape-determining protein MreC of Caulobacter vibrioides (strain NA1000 / CB15N) (Caulobacter crescentus).